Consider the following 159-residue polypeptide: 2-C-methyl-D-erythritol 2,4-cyclodiphosphate synthase (159 aa).

A divalent metal cation is bound by residues D8 and H10. 4-CDP-2-C-methyl-D-erythritol 2-phosphate is bound by residues 8–10 (DVH) and 34–35 (HS). Position 42 (H42) interacts with a divalent metal cation. 4-CDP-2-C-methyl-D-erythritol 2-phosphate-binding positions include 56-58 (DIG), 61-65 (FPDTD), 100-106 (AQAPKML), 132-135 (TTTE), F139, and R142.

It belongs to the IspF family. Homotrimer. A divalent metal cation is required as a cofactor.

The catalysed reaction is 4-CDP-2-C-methyl-D-erythritol 2-phosphate = 2-C-methyl-D-erythritol 2,4-cyclic diphosphate + CMP. The protein operates within isoprenoid biosynthesis; isopentenyl diphosphate biosynthesis via DXP pathway; isopentenyl diphosphate from 1-deoxy-D-xylulose 5-phosphate: step 4/6. In terms of biological role, involved in the biosynthesis of isopentenyl diphosphate (IPP) and dimethylallyl diphosphate (DMAPP), two major building blocks of isoprenoid compounds. Catalyzes the conversion of 4-diphosphocytidyl-2-C-methyl-D-erythritol 2-phosphate (CDP-ME2P) to 2-C-methyl-D-erythritol 2,4-cyclodiphosphate (ME-CPP) with a corresponding release of cytidine 5-monophosphate (CMP). In Klebsiella pneumoniae (strain 342), this protein is 2-C-methyl-D-erythritol 2,4-cyclodiphosphate synthase.